Consider the following 371-residue polypeptide: Cytochrome b (371 aa).

The next 4 helical transmembrane spans lie at 25–45, 69–90, 105–125, and 170–190; these read FGSM…FLAV, WMMQ…YIHI, WMSG…GYVL, and FFAL…LHII. Heme b is bound by residues His75 and His89. Heme b contacts are provided by His174 and His188. His193 contributes to the a ubiquinone binding site. Transmembrane regions (helical) follow at residues 218 to 238, 280 to 300, 312 to 332, and 339 to 358; these read HKDL…SSFF, LGGA…PFTH, LSQL…WAAT, and FIVI…LSTP.

The protein belongs to the cytochrome b family. In terms of assembly, the cytochrome bc1 complex contains 3 respiratory subunits (MT-CYB, CYC1 and UQCRFS1), 2 core proteins (UQCRC1 and UQCRC2) and probably 6 low-molecular weight proteins. Requires heme b as cofactor.

It localises to the mitochondrion inner membrane. Functionally, component of the ubiquinol-cytochrome c reductase complex (complex III or cytochrome b-c1 complex) that is part of the mitochondrial respiratory chain. The b-c1 complex mediates electron transfer from ubiquinol to cytochrome c. Contributes to the generation of a proton gradient across the mitochondrial membrane that is then used for ATP synthesis. The chain is Cytochrome b (MT-CYB) from Aspidites melanocephalus (Black-headed python).